Here is a 65-residue protein sequence, read N- to C-terminus: Small ribosomal subunit protein bS21 (65 aa).

The interval 39–65 is disordered; that stretch reads EKPSIKRKKKAIAARKRALKKQRKMMD. Residues 43–65 show a composition bias toward basic residues; it reads IKRKKKAIAARKRALKKQRKMMD.

This sequence belongs to the bacterial ribosomal protein bS21 family.

The protein is Small ribosomal subunit protein bS21 of Pelobacter propionicus (strain DSM 2379 / NBRC 103807 / OttBd1).